The following is a 473-amino-acid chain: ATP synthase subunit beta (473 aa).

Position 153-160 (153-160 (GGAGVGKT)) interacts with ATP.

This sequence belongs to the ATPase alpha/beta chains family. In terms of assembly, F-type ATPases have 2 components, CF(1) - the catalytic core - and CF(0) - the membrane proton channel. CF(1) has five subunits: alpha(3), beta(3), gamma(1), delta(1), epsilon(1). CF(0) has three main subunits: a(1), b(2) and c(9-12). The alpha and beta chains form an alternating ring which encloses part of the gamma chain. CF(1) is attached to CF(0) by a central stalk formed by the gamma and epsilon chains, while a peripheral stalk is formed by the delta and b chains.

The protein resides in the cell inner membrane. It catalyses the reaction ATP + H2O + 4 H(+)(in) = ADP + phosphate + 5 H(+)(out). Functionally, produces ATP from ADP in the presence of a proton gradient across the membrane. The catalytic sites are hosted primarily by the beta subunits. In Rickettsia akari (strain Hartford), this protein is ATP synthase subunit beta.